The chain runs to 463 residues: L-seryl-tRNA(Sec) selenium transferase (463 aa).

K295 carries the post-translational modification N6-(pyridoxal phosphate)lysine.

The protein belongs to the SelA family. In terms of assembly, homodecamer; pentamer of dimers. Binds only one seryl-tRNA(Sec) per dimer. The cofactor is pyridoxal 5'-phosphate.

Its subcellular location is the cytoplasm. The catalysed reaction is L-seryl-tRNA(Sec) + selenophosphate + H(+) = L-selenocysteinyl-tRNA(Sec) + phosphate. The protein operates within aminoacyl-tRNA biosynthesis; selenocysteinyl-tRNA(Sec) biosynthesis; selenocysteinyl-tRNA(Sec) from L-seryl-tRNA(Sec) (bacterial route): step 1/1. Functionally, converts seryl-tRNA(Sec) to selenocysteinyl-tRNA(Sec) required for selenoprotein biosynthesis. This chain is L-seryl-tRNA(Sec) selenium transferase, found in Shigella flexneri.